Reading from the N-terminus, the 500-residue chain is Probable malate:quinone oxidoreductase (500 aa).

This sequence belongs to the MQO family. It depends on FAD as a cofactor.

The catalysed reaction is (S)-malate + a quinone = a quinol + oxaloacetate. It functions in the pathway carbohydrate metabolism; tricarboxylic acid cycle; oxaloacetate from (S)-malate (quinone route): step 1/1. This Prochlorococcus marinus (strain MIT 9211) protein is Probable malate:quinone oxidoreductase.